Here is a 1074-residue protein sequence, read N- to C-terminus: Probable arabinosyltransferase C (1074 aa).

The next 10 membrane-spanning stretches (helical) occupy residues 15–37, 214–236, 251–273, 415–437, 452–474, 516–538, 573–595, 608–630, 645–667, and 684–706; these read ARLVAIIAGLLGTLMAIATPLLP, LLKLLAMIVGVAMTVIALGALHV, SRWWSMTPLDGLVSAMLVWWHFV, IIIGALTLFSGPTGIAAVGALLV, RFGYWALLAPIAAAGTVTIFLIF, SVARRFAVLTLLLALAVSIAMTL, THQFGVFAGLAGCLGALAAVAVT, FGAAVLFVTALSFATVNGWWYVS, FGFTTMLLGLSVLALLVAAWFHF, and LLVAPLAVATWALVIFEVVSLTL.

The protein belongs to the emb family.

Its subcellular location is the cell membrane. Functionally, arabinosyl transferase responsible for the polymerization of arabinose into the arabinan of arabinogalactan. The protein is Probable arabinosyltransferase C (embC) of Mycolicibacterium smegmatis (Mycobacterium smegmatis).